A 410-amino-acid polypeptide reads, in one-letter code: Aspartate aminotransferase (410 aa).

L-aspartate contacts are provided by Gly-47, Trp-135, and Asn-185. Lys-249 is subject to N6-(pyridoxal phosphate)lysine. L-aspartate is bound at residue Arg-385.

It belongs to the class-I pyridoxal-phosphate-dependent aminotransferase family. In terms of assembly, homodimer. It depends on pyridoxal 5'-phosphate as a cofactor.

It localises to the cytoplasm. The enzyme catalyses L-aspartate + 2-oxoglutarate = oxaloacetate + L-glutamate. The catalysed reaction is L-2-aminoadipate + 2-oxoglutarate = 2-oxoadipate + L-glutamate. Catalyzes the reversible conversion of aspartate and 2-oxoglutarate to glutamate and oxaloacetate. Genetic evidence shows that this protein is involved in L-lysine catabolism. It may have 2-aminoadipate:2-oxoglutarate aminotransferase activity. This is Aspartate aminotransferase (aatB) from Rhizobium meliloti (strain 1021) (Ensifer meliloti).